The chain runs to 264 residues: Indole-3-glycerol phosphate synthase (264 aa).

It belongs to the TrpC family.

The enzyme catalyses 1-(2-carboxyphenylamino)-1-deoxy-D-ribulose 5-phosphate + H(+) = (1S,2R)-1-C-(indol-3-yl)glycerol 3-phosphate + CO2 + H2O. It functions in the pathway amino-acid biosynthesis; L-tryptophan biosynthesis; L-tryptophan from chorismate: step 4/5. The polypeptide is Indole-3-glycerol phosphate synthase (Rhizorhabdus wittichii (strain DSM 6014 / CCUG 31198 / JCM 15750 / NBRC 105917 / EY 4224 / RW1) (Sphingomonas wittichii)).